A 364-amino-acid polypeptide reads, in one-letter code: PDZ and LIM domain protein 3 (364 aa).

The region spanning 1 to 84 is the PDZ domain; sequence MPQTVILPGP…QLCLKIDRGE (84 aa). A phosphoserine mark is found at serine 18, serine 93, and serine 264. The 60-residue stretch at 292 to 351 folds into the LIM zinc-binding domain; it reads PLCDKCGSGIVGAVVKARDKYRHPECFVCADCNLNLKQKGYFFIEGELYCETHARARTKP.

Interacts with ACTN2. Forms a heterodimer with PDLIM4 (via LIM domain). Isoform 1 is highly expressed in differentiated skeletal muscle. Isoform 2 is heart-specific.

Its subcellular location is the cytoplasm. The protein resides in the myofibril. The protein localises to the sarcomere. It is found in the z line. In terms of biological role, may play a role in the organization of actin filament arrays within muscle cells. In Homo sapiens (Human), this protein is PDZ and LIM domain protein 3 (PDLIM3).